Reading from the N-terminus, the 635-residue chain is tRNA 5-methylaminomethyl-2-thiouridine biosynthesis bifunctional protein MnmC (635 aa).

The tract at residues 1-227 (MSEPIDWLPD…KRSNLQAEFD (227 aa)) is tRNA (mnm(5)s(2)U34)-methyltransferase. Residues 254–635 (IGGGLSGAAV…ALSTERLPAD (382 aa)) form an FAD-dependent cmnm(5)s(2)U34 oxidoreductase region.

This sequence in the N-terminal section; belongs to the methyltransferase superfamily. tRNA (mnm(5)s(2)U34)-methyltransferase family. In the C-terminal section; belongs to the DAO family. Requires FAD as cofactor.

The protein localises to the cytoplasm. It catalyses the reaction 5-aminomethyl-2-thiouridine(34) in tRNA + S-adenosyl-L-methionine = 5-methylaminomethyl-2-thiouridine(34) in tRNA + S-adenosyl-L-homocysteine + H(+). Functionally, catalyzes the last two steps in the biosynthesis of 5-methylaminomethyl-2-thiouridine (mnm(5)s(2)U) at the wobble position (U34) in tRNA. Catalyzes the FAD-dependent demodification of cmnm(5)s(2)U34 to nm(5)s(2)U34, followed by the transfer of a methyl group from S-adenosyl-L-methionine to nm(5)s(2)U34, to form mnm(5)s(2)U34. This Paracidovorax citrulli (strain AAC00-1) (Acidovorax citrulli) protein is tRNA 5-methylaminomethyl-2-thiouridine biosynthesis bifunctional protein MnmC.